We begin with the raw amino-acid sequence, 853 residues long: E3 ubiquitin-protein ligase RNF216 (853 aa).

Disordered regions lie at residues 33–102, 125–152, and 165–228; these read TISD…DDIV, PLEV…ASVD, and PYFQ…AHPL. The span at 53–73 shows a compositional bias: acidic residues; sequence QQEDDLDDDVILTEDDSEDEY. Lys-89 participates in a covalent cross-link: Glycyl lysine isopeptide (Lys-Gly) (interchain with G-Cter in SUMO2). Residues Lys-339 and Lys-342 each participate in a glycyl lysine isopeptide (Lys-Gly) (interchain with G-Cter in SUMO2) cross-link. Position 407 is a phosphoserine (Ser-407). Glycyl lysine isopeptide (Lys-Gly) (interchain with G-Cter in SUMO2) cross-links involve residues Lys-413, Lys-418, Lys-436, Lys-447, and Lys-473. A coiled-coil region spans residues 463-479; the sequence is VKQEQEFYEQKIKEMAE. Positions 499–716 are TRIAD supradomain; sequence QLIECRCCYG…SPGAPCQECS (218 aa). Zn(2+) contacts are provided by Cys-503, Cys-506, Cys-525, Cys-528, Cys-593, and Cys-596. The RING-type 1 zinc finger occupies 503-552; the sequence is CRCCYGEFPFEELTQCADAHLFCKECLIRYAQEAVFGSGKSELSCMEGSC. The IBR-type zinc-finger motif lies at 571–636; that stretch reads YKYYERKAEE…LWKEHNGLTC (66 aa). Residue Lys-607 forms a Glycyl lysine isopeptide (Lys-Gly) (interchain with G-Cter in SUMO2) linkage. Cys-611, Cys-616, Cys-621, Cys-624, His-631, and Cys-636 together coordinate Zn(2+). Glycyl lysine isopeptide (Lys-Gly) (interchain with G-Cter in SUMO2) cross-links involve residues Lys-646 and Lys-654. Residues Cys-663 and Cys-666 each coordinate Zn(2+). The RING-type 2; atypical zinc-finger motif lies at 663-691; sequence CHKCGTGLIKSEGCNRMSCRCGAQMCYLC. Residue Cys-676 is part of the active site. Positions 681, 683, 688, 691, 704, and 712 each coordinate Zn(2+). Residues 725–751 adopt a coiled-coil conformation; that stretch reads TEDDEKLIEEIQKEAEEEQKRKNGENT. Glycyl lysine isopeptide (Lys-Gly) (interchain with G-Cter in SUMO2) cross-links involve residues Lys-753 and Lys-761.

Interacts with UBE2L3 and to some extent with UBE2L6. Interacts with TRAF3, TLR3, TLR4, TLR5 and TLR9. Isoform 3/ZIN binds RIPK1. In terms of processing, auto-ubiquitinated. Post-translationally, phosphorylation at Ser-719 enhances acceptor ubiquitin binding and chain-type specificity towards 'Lys-63' di-ubiquitin but not di-ubiquitin with other linkage types.

It is found in the cytoplasm. Its subcellular location is the cytoplasmic vesicle. The protein localises to the clathrin-coated vesicle. The catalysed reaction is S-ubiquitinyl-[E2 ubiquitin-conjugating enzyme]-L-cysteine + [acceptor protein]-L-lysine = [E2 ubiquitin-conjugating enzyme]-L-cysteine + N(6)-ubiquitinyl-[acceptor protein]-L-lysine.. The protein operates within protein modification; protein ubiquitination. Allosterically activated by 'Lys-63'-linked di-ubiquitin. Functionally, E3 ubiquitin ligase which accepts ubiquitin from specific E2 ubiquitin-conjugating enzymes, and then transfers it to substrates promoting their ubiquitination. Plays a role in the regulation of antiviral responses by promoting the degradation of TRAF3, TLR4 and TLR9. In turn, down-regulates NF-kappa-B and IRF3 activation as well as beta interferon production. Also participates in the regulation of autophagy by ubiquitinating BECN1 leading to its degradation and autophagy inhibition. Plays a role in ARC-dependent synaptic plasticity by mediating ARC ubiquitination resulting in its rapid proteasomal degradation. Plays aso an essential role in spermatogenesis and male fertility. Mechanistically, regulates meiosis by promoting the degradation of PRKACB through the ubiquitin-mediated lysosome pathway. Modulates the gonadotropin-releasing hormone signal pathway by affecting the stability of STAU2 that is required for the microtubule-dependent transport of neuronal RNA from the cell body to the dendrite. In Mus musculus (Mouse), this protein is E3 ubiquitin-protein ligase RNF216 (Rnf216).